We begin with the raw amino-acid sequence, 741 residues long: Hemolysin (741 aa).

The first 25 residues, 1 to 25 (MPKLNRCAIAIFTILSAISSPTLLA), serve as a signal peptide directing secretion. The propeptide occupies 26–157 (NINEPSGEAA…RSGFASPAPA (132 aa)). 3 disulfide bridges follow: Cys182–Cys200, Cys497–Cys511, and Cys537–Cys549. One can recognise a Ricin B-type lectin domain in the interval 484 to 575 (RPVNLQLASF…LTNVYSGESL (92 aa)). Residues 607-741 (NAQESSPILG…LVKGVQFDLN (135 aa)) form a beta-prism domain region.

This sequence belongs to the HlyA hemolysin family. In terms of assembly, monomer. Homoheptamer. After binding to target membranes the protein assembles into a heptameric pre-pore complex. Proteolytic cleavage triggers a conformation change that is required for membrane insertion and pore formation. Post-translationally, proteolytical cleavage is required to convert the 80 kDa hemolysin precursor into the active 65 kDa hemolysin.

The protein resides in the secreted. It localises to the host cell membrane. Its function is as follows. Bacterial hemolysin that causes cytolysis by forming heptameric pores in target host membranes. This chain is Hemolysin (hlyA), found in Vibrio cholerae serotype O1 (strain ATCC 39315 / El Tor Inaba N16961).